Reading from the N-terminus, the 255-residue chain is Type III pantothenate kinase (255 aa).

Residue 6-13 participates in ATP binding; that stretch reads DIGNTNIK. Residue 107–110 coordinates substrate; it reads GADR. Catalysis depends on D109, which acts as the Proton acceptor. Residue T132 coordinates ATP. Position 184 (T184) interacts with substrate.

This sequence belongs to the type III pantothenate kinase family. In terms of assembly, homodimer. It depends on NH4(+) as a cofactor. K(+) is required as a cofactor.

It is found in the cytoplasm. It catalyses the reaction (R)-pantothenate + ATP = (R)-4'-phosphopantothenate + ADP + H(+). Its pathway is cofactor biosynthesis; coenzyme A biosynthesis; CoA from (R)-pantothenate: step 1/5. Its function is as follows. Catalyzes the phosphorylation of pantothenate (Pan), the first step in CoA biosynthesis. In Roseiflexus castenholzii (strain DSM 13941 / HLO8), this protein is Type III pantothenate kinase.